The primary structure comprises 146 residues: Large ribosomal subunit protein bL21 (146 aa).

Residues 117–146 (ITIGKSAPKSSSKKETVKKETKPKSEKSTN) are disordered. The segment covering 128–146 (SKKETVKKETKPKSEKSTN) has biased composition (basic and acidic residues).

The protein belongs to the bacterial ribosomal protein bL21 family. As to quaternary structure, part of the 50S ribosomal subunit. Contacts protein L20.

This protein binds to 23S rRNA in the presence of protein L20. This chain is Large ribosomal subunit protein bL21, found in Prochlorococcus marinus (strain MIT 9301).